The sequence spans 2488 residues: PKS-NRPS hybrid synthetase swnK (2488 aa).

The interval 33–422 (FEQVADRFPD…GRIDGVVKIR (390 aa)) is adenylation (A) domain. A Carrier 1 domain is found at 523–598 (QPTSELEQRI…ALAAYLAGTG (76 aa)). Ser558 carries the O-(pantetheine 4'-phosphoryl)serine modification. One can recognise a Ketosynthase family 3 (KS3) domain in the interval 616–1039 (HEDIAIVSMA…GTNAHVIVEE (424 aa)). Residues Cys785, His920, and His960 each act as for beta-ketoacyl synthase activity in the active site. Residues 1149 to 1471 (LFTGQGSQLP…SLSELHVRHV (323 aa)) are malonyl-CoA:ACP transacylase (MAT) domain. The interval 1723-1901 (GAVLVTGGLG…ASSVAYGTWA (179 aa)) is ketoreductase (KR) domain. In terms of domain architecture, Carrier 2 spans 2002-2077 (SIVLHMVQAT…SLSEFLLCRL (76 aa)). Ser2037 carries the O-(pantetheine 4'-phosphoryl)serine modification. Residues 2084–2103 (STSSPSDTDGATPSTPTSAA) form a disordered region. The tract at residues 2136–2364 (VTGATGFVGT…VLPVDYLCGT (229 aa)) is thioester reductase (TE) domain.

In the N-terminal section; belongs to the NRP synthetase family.

The catalysed reaction is L-pipecolate + malonyl-CoA + 2 NADPH + 4 H(+) = (8aS)-octahydroindolizin-1-one + CO2 + 2 NADP(+) + CoA + 2 H2O. The enzyme catalyses L-pipecolate + malonyl-CoA + 3 NADPH + 5 H(+) = (1R,8aS)-octahydroindolizin-1-ol + CO2 + 3 NADP(+) + CoA + 2 H2O. It carries out the reaction L-pipecolate + malonyl-CoA + 3 NADPH + 5 H(+) = (1S,8aS)-octahydroindolizin-1-ol + CO2 + 3 NADP(+) + CoA + 2 H2O. It functions in the pathway mycotoxin biosynthesis. PKS-NRPS hybrid synthetase; part of the gene cluster that mediates the biosynthesis of swainsonine (SW), a cytotoxic fungal alkaloid and a potential cancer therapy drug. Swainsonine production occurs via a multibranched pathway and is dispensable for fungal colonization of plants and infection of insect hosts. The first step of swainsonine biosynthesis is the production of the precursor pipecolic acid (PA) via conversion of L-lysine (Lys) to 1-piperideine-6-carboxylate (P6C) by the aminotransferase swnA, the latter being further reduced to PA by the reductase swnR. PA can be converted from lysine by both the SW biosynthetic cluster and the unclustered genes such as lysine cyclodeaminase. The PKS-NRPS hybrid synthetase swnK uptakes and condensates PA and malonyl-CoA with and without skipping of the ketoreductase (KR) domain in order to produce 3 intermediates, 1-oxoindolizidine, (1S)-1-hydroxyindolizin, and (1R)-1-hydroxyindolizine; with the transisomer (1S)-1-hydroxyindolizin being predominant. The terminal thioester reductase (TE) domain of swnK is involved in reduction of the thioester bond to release the intermediate aldehydes. The oxidoreductase swnN could contribute to the reduction of 1-oxoindolizidine to (1S)-1-hydroxyindolizin and (1R)-1-hydroxyindolizine, contributing to the major route of SW production. The dioxygenase swnH2 would be responsible for the oxidization of (1R)-1-hydroxyindolizine into (1R,2S)-1,2-dihydroxyindolizine and of (1S)-1-hydroxyindolizin to yield both (1R,2S)-1,2-dihydroxyindolizine and (1S,2S)-1,2-dihydroxyindolizine. The dioxygenase swnH1 then performs the conversion of the 1,2-dihydroxyindolizine epimers to SW. The sequence is that of PKS-NRPS hybrid synthetase swnK from Metarhizium robertsii (strain ARSEF 23 / ATCC MYA-3075) (Metarhizium anisopliae (strain ARSEF 23)).